A 225-amino-acid chain; its full sequence is LPLCCYLRLVSAEGDPIPEELYEMLSDHSIRSFDDLQRLLHRDSVDEDGAELDLNMTRAHSGVESESSSRGRRSLGSLAAAEPAVIAECKTRTEVFQISRNLIDRTNANFLVWPPCVEVQRCSGCCNNRNVQCRASQVQMRPVQVRKIEIVRKKPVFKKATVTLEDHLACKCETVVTPRPVTRSPGTSREHRAKTPQTRVTVRTVRIRRPPKGKHRKFKHTHDKK.

The signal sequence occupies residues 1 to 12 (LPLCCYLRLVSA). Residues 13-73 (EGDPIPEELY…ESESSSRGRR (61 aa)) constitute a propeptide, removed in mature form. N-linked (GlcNAc...) asparagine glycosylation occurs at asparagine 55. 3 cysteine pairs are disulfide-bonded: cysteine 89/cysteine 133, cysteine 122/cysteine 170, and cysteine 126/cysteine 172. A propeptide spans 183 to 225 (RSPGTSREHRAKTPQTRVTVRTVRIRRPPKGKHRKFKHTHDKK) (removed in mature form).

Belongs to the PDGF/VEGF growth factor family. Antiparallel homodimer; disulfide-linked. Antiparallel heterodimer with PDGFA; disulfide-linked. The PDGFB homodimer interacts with PDGFRA and PDGFRB homodimers, and with heterodimers formed by PDGFRA and PDGFRB. The heterodimer composed of PDGFA and PDGFB interacts with PDGFRB homodimers, and with heterodimers formed by PDGFRA and PDGFRB. Interacts with XLKD1. Interacts with LRP1. Interacts with SORL1 (via the N-terminal ectodomain). Interacts with CD82; this interaction inhibits PDGFB-mediated signaling pathway. In terms of tissue distribution, expressed in a distinct subpopulation of smooth muscle cells in injured arteries.

Its subcellular location is the secreted. Functionally, growth factor that plays an essential role in the regulation of embryonic development, cell proliferation, cell migration, survival and chemotaxis. Potent mitogen for cells of mesenchymal origin. Required for normal proliferation and recruitment of pericytes and vascular smooth muscle cells in the central nervous system, skin, lung, heart and placenta. Required for normal blood vessel development, and for normal development of kidney glomeruli. Plays an important role in wound healing. Signaling is modulated by the formation of heterodimers with PDGFA. This chain is Platelet-derived growth factor subunit B (Pdgfb), found in Rattus norvegicus (Rat).